Consider the following 388-residue polypeptide: tRNA (guanine-N(7)-)-methyltransferase non-catalytic subunit (388 aa).

WD repeat units follow at residues 58 to 102, 112 to 151, 153 to 194, and 196 to 234; these read VEKR…KGDI, VVPK…AIEM, GAIS…DSFF, and GHTE…APRR. Residues 365–388 form a disordered region; the sequence is EKKKRRLNEDINGDDGEGPGPSNS.

The protein belongs to the WD repeat TRM82 family. In terms of assembly, forms a heterodimer with the catalytic subunit.

The protein localises to the nucleus. It functions in the pathway tRNA modification; N(7)-methylguanine-tRNA biosynthesis. Its function is as follows. Required for the formation of N(7)-methylguanine at position 46 (m7G46) in tRNA. In the complex, it is required to stabilize and induce conformational changes of the catalytic subunit. The polypeptide is tRNA (guanine-N(7)-)-methyltransferase non-catalytic subunit (Caenorhabditis elegans).